The sequence spans 284 residues: 2-dehydro-3-deoxyphosphooctonate aldolase (284 aa).

The protein belongs to the KdsA family.

Its subcellular location is the cytoplasm. It carries out the reaction D-arabinose 5-phosphate + phosphoenolpyruvate + H2O = 3-deoxy-alpha-D-manno-2-octulosonate-8-phosphate + phosphate. It functions in the pathway carbohydrate biosynthesis; 3-deoxy-D-manno-octulosonate biosynthesis; 3-deoxy-D-manno-octulosonate from D-ribulose 5-phosphate: step 2/3. Its pathway is bacterial outer membrane biogenesis; lipopolysaccharide biosynthesis. This chain is 2-dehydro-3-deoxyphosphooctonate aldolase, found in Burkholderia vietnamiensis (strain G4 / LMG 22486) (Burkholderia cepacia (strain R1808)).